Consider the following 182-residue polypeptide: tRNA-splicing endonuclease (182 aa).

Residues Tyr-119, His-127, and Lys-158 contribute to the active site.

The protein belongs to the tRNA-intron endonuclease family. Archaeal short subfamily. As to quaternary structure, homotetramer; although the tetramer contains four active sites, only two participate in the cleavage. Therefore, it should be considered as a dimer of dimers.

The catalysed reaction is pretRNA = a 3'-half-tRNA molecule with a 5'-OH end + a 5'-half-tRNA molecule with a 2',3'-cyclic phosphate end + an intron with a 2',3'-cyclic phosphate and a 5'-hydroxyl terminus.. In terms of biological role, endonuclease that removes tRNA introns. Cleaves pre-tRNA at the 5'- and 3'-splice sites to release the intron. The products are an intron and two tRNA half-molecules bearing 2',3' cyclic phosphate and 5'-OH termini. Recognizes a pseudosymmetric substrate in which 2 bulged loops of 3 bases are separated by a stem of 4 bp. This chain is tRNA-splicing endonuclease, found in Saccharolobus islandicus (strain M.16.27) (Sulfolobus islandicus).